We begin with the raw amino-acid sequence, 226 residues long: Glutathione peroxidase 3 (226 aa).

An N-terminal signal peptide occupies residues 1-24 (MARILRASCLLSLLLAGFVPPGRG). The active site involves Sec73. Residue Sec73 is a non-standard amino acid, selenocysteine.

The protein belongs to the glutathione peroxidase family. Homotetramer. As to expression, secreted in plasma.

Its subcellular location is the secreted. It catalyses the reaction 2 glutathione + H2O2 = glutathione disulfide + 2 H2O. It carries out the reaction tert-butyl hydroperoxide + 2 glutathione = tert-butanol + glutathione disulfide + H2O. In terms of biological role, protects cells and enzymes from oxidative damage, by catalyzing the reduction of hydrogen peroxide, lipid peroxides and organic hydroperoxide, by glutathione. This Mus musculus (Mouse) protein is Glutathione peroxidase 3.